The primary structure comprises 479 residues: Cysteine--tRNA ligase (479 aa).

C29 is a Zn(2+) binding site. Residues 31–41 carry the 'HIGH' region motif; it reads ATVQGAPHIGH. The disordered stretch occupies residues 171-197; that stretch reads QRVEDMQDAPDADPRGKRDPRDFALWK. A compositionally biased stretch (basic and acidic residues) spans 182–197; it reads ADPRGKRDPRDFALWK. Zn(2+)-binding residues include C224, H249, and E253. Residues 280–284 carry the 'KMSKS' region motif; the sequence is KMSKS. ATP is bound at residue K283.

Belongs to the class-I aminoacyl-tRNA synthetase family. As to quaternary structure, monomer. It depends on Zn(2+) as a cofactor.

It localises to the cytoplasm. The catalysed reaction is tRNA(Cys) + L-cysteine + ATP = L-cysteinyl-tRNA(Cys) + AMP + diphosphate. This is Cysteine--tRNA ligase from Kocuria rhizophila (strain ATCC 9341 / DSM 348 / NBRC 103217 / DC2201).